The following is a 307-amino-acid chain: MNHQTQTLSLEHFVSLEELSNQEVMSLIKRSIEVKENPSNIGFDKDYYVSNLFFENSTRTHKSFEMAELKLGLKTIEFNADTSSVNKGETLYDTILTMSALGLDVCVIRHPDIDYYKELIASPNIHSAIVNGGDGSGQHPSQSLLDLVTIYEEFGYFKGLKIAIVGDLTHSRVAKSNMQVLKRLGAEIFFSGPKEWYSSQFDEYGQYLPIDQLVDQIDVLMLLRVQHERHDGKGVFSKESYHQQFGLTKERYKHLRDTAIIMHPAPVNRDVEIASDLVEADKARIVKQMSNGVYARIAILEAVLNSR.

Carbamoyl phosphate-binding residues include Arg-59 and Thr-60. Lys-87 contacts L-aspartate. Carbamoyl phosphate is bound by residues Arg-109, His-139, and Gln-142. The L-aspartate site is built by Arg-172 and Arg-224. Residues Ala-265 and Pro-266 each coordinate carbamoyl phosphate.

It belongs to the aspartate/ornithine carbamoyltransferase superfamily. ATCase family. Heterododecamer (2C3:3R2) of six catalytic PyrB chains organized as two trimers (C3), and six regulatory PyrI chains organized as three dimers (R2).

It catalyses the reaction carbamoyl phosphate + L-aspartate = N-carbamoyl-L-aspartate + phosphate + H(+). It functions in the pathway pyrimidine metabolism; UMP biosynthesis via de novo pathway; (S)-dihydroorotate from bicarbonate: step 2/3. In terms of biological role, catalyzes the condensation of carbamoyl phosphate and aspartate to form carbamoyl aspartate and inorganic phosphate, the committed step in the de novo pyrimidine nucleotide biosynthesis pathway. This Streptococcus agalactiae serotype Ia (strain ATCC 27591 / A909 / CDC SS700) protein is Aspartate carbamoyltransferase catalytic subunit.